An 805-amino-acid polypeptide reads, in one-letter code: Hypoxia-inducible factor 1-alpha (805 aa).

The tract at residues 1–26 (MEGSVVVSEKKRISSERRKEKSRDAA) is disordered. Residues 8-26 (SEKKRISSERRKEKSRDAA) are compositionally biased toward basic and acidic residues. The bHLH domain occupies 17–70 (RRKEKSRDAARCRRSNESEVFYELSHELPLPHNVSSHLDKASIMRLDHQLPAVE). PAS domains lie at 85–157 (DKQL…PAKK) and 229–300 (PHPS…TKGQ). The region spanning 303 to 346 (TGQYRMLAKKGGYVWVETQATVIYNSKNSQPQCIVCVNYVLSEV) is the PAC domain. Pro404 and Pro560 each carry 4-hydroxyproline. Residues 628–669 (KESTSAPVSPYNGNRSRTSSPVRPAKAVVDKTEKSRPGTPNL) form a disordered region. Polar residues predominate over residues 629–648 (ESTSAPVSPYNGNRSRTSSP). Position 782 is a (3S)-3-hydroxyasparagine (Asn782).

As to quaternary structure, efficient DNA binding requires heterodimerization of an alpha and a beta/ARNT subunit. In terms of processing, in normoxia, is hydroxylated on Pro-404 and Pro-560. The hydroxylated prolines promote interaction with VHL, initiating rapid ubiquitination and subsequent proteasomal degradation. Under hypoxia, proline hydroxylation is impaired and ubiquitination is attenuated, resulting in stabilization. In normoxia, is hydroxylated on Asn-782, thus abrogating interaction with CREBBP and EP300 and preventing transcriptional activation. Post-translationally, the iron and 2-oxoglutarate dependent 3-hydroxylation of asparagine is (S) stereospecific within HIF CTAD domains.

It localises to the cytoplasm. The protein resides in the nucleus. The protein localises to the nucleus speckle. Induced by reactive oxygen species (ROS). Its function is as follows. Functions as a master transcriptional regulator of the adaptive response to hypoxia. Under hypoxic conditions, activates the transcription of over 40 genes, including erythropoietin, glucose transporters, glycolytic enzymes, vascular endothelial growth factor, HILPDA, and other genes whose protein products increase oxygen delivery or facilitate metabolic adaptation to hypoxia. Plays an essential role in embryonic vascularization, tumor angiogenesis and pathophysiology of ischemic disease. In Xenopus laevis (African clawed frog), this protein is Hypoxia-inducible factor 1-alpha (hif1a).